We begin with the raw amino-acid sequence, 261 residues long: Follistatin-related protein 3 (261 aa).

Residues 1–26 form the signal peptide; the sequence is MRPRAPGPLWPLPWGALAWAVGFVGS. Positions 36 to 107 constitute a TB domain; it reads GVCWLQQGRE…SCEGVECGPG (72 aa). Cystine bridges form between C38/C61, C48/C92, C62/C95, C99/C110, C104/C119, C121/C153, C125/C146, and C135/C167. An N-linked (GlcNAc...) asparagine glycan is attached at N73. The 21-residue stretch at 99–119 folds into the Follistatin-like 1 domain; the sequence is CEGVECGPGKACRMLGGRPRC. Kazal-like domains are found at residues 113–169 and 189–245; these read LGGR…RCRK and SAHC…SCAG. In terms of domain architecture, Follistatin-like 2 spans 170-193; sequence SCAHVVCLRPQSCVVDQTGSAHCV. 3 cysteine pairs are disulfide-bonded: C195–C229, C200–C222, and C211–C243. Residue N215 is glycosylated (N-linked (GlcNAc...) asparagine). Positions 242-261 are disordered; it reads SCAGTPEPLDPESEEEENFV. Over residues 250-261 the composition is skewed to acidic residues; sequence LDPESEEEENFV.

In terms of assembly, interacts with INHBA and INHBB. Interacts with FN1. Interacts with ADAM12. Interacts with MLLT10; the interaction enhances MLLT10 in vitro transcriptional activity and self-association. Interacts with MSTN.

It localises to the secreted. Its subcellular location is the nucleus. The secreted form is a binding and antagonizing protein for members of the TGF-beta family, such as activin, BMP2 and MSTN. Inhibits activin A-, activin B-, BMP2- and MSDT-induced cellular signaling; more effective on activin A than on activin B. Involved in bone formation; inhibits osteoclast differentiation. Involved in hematopoiesis; involved in differentiation of hemopoietic progenitor cells, increases hematopoietic cell adhesion to fibronectin and seems to contribute to the adhesion of hematopoietic precursor cells to the bone marrow stroma. The nuclear form is probably involved in transcriptional regulation via interaction with MLLT10. The protein is Follistatin-related protein 3 (FSTL3) of Bos taurus (Bovine).